A 548-amino-acid polypeptide reads, in one-letter code: ATP synthase subunit alpha (548 aa).

172 to 179 (GDRKTGKT) is a binding site for ATP.

It belongs to the ATPase alpha/beta chains family. As to quaternary structure, F-type ATPases have 2 components, CF(1) - the catalytic core - and CF(0) - the membrane proton channel. CF(1) has five subunits: alpha(3), beta(3), gamma(1), delta(1), epsilon(1). CF(0) has three main subunits: a(1), b(2) and c(9-12). The alpha and beta chains form an alternating ring which encloses part of the gamma chain. CF(1) is attached to CF(0) by a central stalk formed by the gamma and epsilon chains, while a peripheral stalk is formed by the delta and b chains.

It localises to the cell membrane. It catalyses the reaction ATP + H2O + 4 H(+)(in) = ADP + phosphate + 5 H(+)(out). Its function is as follows. Produces ATP from ADP in the presence of a proton gradient across the membrane. The alpha chain is a regulatory subunit. This is ATP synthase subunit alpha from Mycobacteroides abscessus (strain ATCC 19977 / DSM 44196 / CCUG 20993 / CIP 104536 / JCM 13569 / NCTC 13031 / TMC 1543 / L948) (Mycobacterium abscessus).